The primary structure comprises 120 residues: Flagellar protein FliT (120 aa).

Residues 1–50 form a required for homodimerization region; sequence MERHQHLLSEYQQILTLSEQMLMLATVENWNALVDLEMTYLKAVENTANI. Residues 60–98 are fliD binding; the sequence is LQELLRQKLRSILENEIEIKRLLQRRLDKLSELVGQSTR.

Belongs to the FliT family. In terms of assembly, homodimer. Interacts with FliD and FlhC.

The protein localises to the cytoplasm. The protein resides in the cytosol. Its function is as follows. Dual-function protein that regulates the transcription of class 2 flagellar operons and that also acts as an export chaperone for the filament-capping protein FliD. As a transcriptional regulator, acts as an anti-FlhDC factor; it directly binds FlhC, thus inhibiting the binding of the FlhC/FlhD complex to class 2 promoters, resulting in decreased expression of class 2 flagellar operons. As a chaperone, effects FliD transition to the membrane by preventing its premature polymerization, and by directing it to the export apparatus. In Yersinia pestis bv. Antiqua (strain Antiqua), this protein is Flagellar protein FliT.